We begin with the raw amino-acid sequence, 558 residues long: Potassium-transporting ATPase potassium-binding subunit (558 aa).

The next 12 membrane-spanning stretches (helical) occupy residues 1–21 (MSIV…SRYL), 60–80 (IKHF…LLLI), 129–149 (VITF…IAML), 169–189 (FIVR…ISQG), 246–266 (WSNY…VFLF), 281–301 (IMIF…CLYF), 326–346 (FGIG…TGTV), 353–373 (LTPL…VFGG), 376–396 (VGLM…SLMI), 415–435 (IALS…LAFI), 485–505 (IVML…VSSL), and 523–543 (LFFS…TFLP).

This sequence belongs to the KdpA family. In terms of assembly, the system is composed of three essential subunits: KdpA, KdpB and KdpC.

The protein localises to the cell membrane. In terms of biological role, part of the high-affinity ATP-driven potassium transport (or Kdp) system, which catalyzes the hydrolysis of ATP coupled with the electrogenic transport of potassium into the cytoplasm. This subunit binds the extracellular potassium ions and delivers the ions to the membrane domain of KdpB through an intramembrane tunnel. The polypeptide is Potassium-transporting ATPase potassium-binding subunit (Staphylococcus haemolyticus (strain JCSC1435)).